Here is a 310-residue protein sequence, read N- to C-terminus: MRKIIVGSRRSKLALTQTNWFINELKAAGAPFEFEVKEIVTKGDQILDVQLSKVGGKGLFVKEIEQALYEKEIDFAVHSMKDMPAVLPEGLVIGCIPPREDARDAFISKGHVKFSELPAGAVVGTSSLRRSAQLLTVRPDLEIKWIRGNVDTRLAKLETEEYDAIILAAAGLKRLGWSEDVVTEFLSVEDCLPAVAQGSLGIECREDDTELLDELAKLTDQLTWQEAHAERAFLAAMDGGCQVPIAGYATSNGEEITLTGLVAAPDASVVYKETVVGSDAQKIGEELATILTKQGAFDLIQRVKAEQDAK.

An S-(dipyrrolylmethanemethyl)cysteine modification is found at cysteine 241.

It belongs to the HMBS family. As to quaternary structure, monomer. It depends on dipyrromethane as a cofactor.

It catalyses the reaction 4 porphobilinogen + H2O = hydroxymethylbilane + 4 NH4(+). Its pathway is porphyrin-containing compound metabolism; protoporphyrin-IX biosynthesis; coproporphyrinogen-III from 5-aminolevulinate: step 2/4. Its function is as follows. Tetrapolymerization of the monopyrrole PBG into the hydroxymethylbilane pre-uroporphyrinogen in several discrete steps. In Lysinibacillus sphaericus (strain C3-41), this protein is Porphobilinogen deaminase.